The sequence spans 457 residues: Bifunctional protein GlmU (457 aa).

Positions 1-228 (MEGLVTLILA…SEEITGVNSR (228 aa)) are pyrophosphorylase. UDP-N-acetyl-alpha-D-glucosamine contacts are provided by residues 9–12 (LAAG), Lys23, Gln73, and 78–79 (GT). Mg(2+) is bound at residue Asp102. Positions 139, 154, 169, and 226 each coordinate UDP-N-acetyl-alpha-D-glucosamine. Mg(2+) is bound at residue Asn226. The interval 229–249 (VQLFEAEKIMRKRINYRHMEN) is linker. Residues 250–457 (GVTIVDPDTT…VQERIKKGRL (208 aa)) are N-acetyltransferase. UDP-N-acetyl-alpha-D-glucosamine-binding residues include Arg331 and Lys349. The active-site Proton acceptor is the His361. UDP-N-acetyl-alpha-D-glucosamine is bound by residues Tyr364 and Asn375. Residues 384–385 (NY), Ala421, and Arg438 each bind acetyl-CoA.

It in the N-terminal section; belongs to the N-acetylglucosamine-1-phosphate uridyltransferase family. This sequence in the C-terminal section; belongs to the transferase hexapeptide repeat family. As to quaternary structure, homotrimer. Mg(2+) is required as a cofactor.

Its subcellular location is the cytoplasm. It carries out the reaction alpha-D-glucosamine 1-phosphate + acetyl-CoA = N-acetyl-alpha-D-glucosamine 1-phosphate + CoA + H(+). The catalysed reaction is N-acetyl-alpha-D-glucosamine 1-phosphate + UTP + H(+) = UDP-N-acetyl-alpha-D-glucosamine + diphosphate. It participates in nucleotide-sugar biosynthesis; UDP-N-acetyl-alpha-D-glucosamine biosynthesis; N-acetyl-alpha-D-glucosamine 1-phosphate from alpha-D-glucosamine 6-phosphate (route II): step 2/2. It functions in the pathway nucleotide-sugar biosynthesis; UDP-N-acetyl-alpha-D-glucosamine biosynthesis; UDP-N-acetyl-alpha-D-glucosamine from N-acetyl-alpha-D-glucosamine 1-phosphate: step 1/1. Its pathway is bacterial outer membrane biogenesis; LPS lipid A biosynthesis. In terms of biological role, catalyzes the last two sequential reactions in the de novo biosynthetic pathway for UDP-N-acetylglucosamine (UDP-GlcNAc). The C-terminal domain catalyzes the transfer of acetyl group from acetyl coenzyme A to glucosamine-1-phosphate (GlcN-1-P) to produce N-acetylglucosamine-1-phosphate (GlcNAc-1-P), which is converted into UDP-GlcNAc by the transfer of uridine 5-monophosphate (from uridine 5-triphosphate), a reaction catalyzed by the N-terminal domain. The chain is Bifunctional protein GlmU from Thermoanaerobacter pseudethanolicus (strain ATCC 33223 / 39E) (Clostridium thermohydrosulfuricum).